Reading from the N-terminus, the 185-residue chain is Deoxyuridine 5'-triphosphate nucleotidohydrolase (185 aa).

The disordered stretch occupies residues 1–23; that stretch reads MSHLQAHMQRNNKESHSLSPFSQ. Substrate is bound by residues 95 to 97, Asn-108, 112 to 114, and Lys-122; these read RSG and TID. The interval 160-185 is disordered; that stretch reads DQKDSSQTPSNEGSRGADGFGSTGHD. Positions 175–185 are enriched in gly residues; sequence GADGFGSTGHD.

It belongs to the dUTPase family. It depends on Mg(2+) as a cofactor.

It carries out the reaction dUTP + H2O = dUMP + diphosphate + H(+). It participates in pyrimidine metabolism; dUMP biosynthesis; dUMP from dCTP (dUTP route): step 2/2. This enzyme is involved in nucleotide metabolism: it produces dUMP, the immediate precursor of thymidine nucleotides and it decreases the intracellular concentration of dUTP so that uracil cannot be incorporated into DNA. This is Deoxyuridine 5'-triphosphate nucleotidohydrolase from Bartonella quintana (strain Toulouse) (Rochalimaea quintana).